The primary structure comprises 651 residues: Beta-glucuronidase (651 aa).

The first 22 residues, 1-22 (MARGSAVAWAALGPLLWGCALG), serve as a signal peptide directing secretion. Residues Asn-173, Asn-272, and Asn-420 are each glycosylated (N-linked (GlcNAc...) asparagine). Catalysis depends on Glu-451, which acts as the Proton donor. Residue Asn-631 is glycosylated (N-linked (GlcNAc...) asparagine).

The protein belongs to the glycosyl hydrolase 2 family. As to quaternary structure, homotetramer. Post-translationally, N-linked glycosylated with 3 to 4 oligosaccharide chains.

It localises to the lysosome. It carries out the reaction a beta-D-glucuronoside + H2O = D-glucuronate + an alcohol. Inhibited by L-aspartic acid. In terms of biological role, plays an important role in the degradation of dermatan and keratan sulfates. This chain is Beta-glucuronidase (GUSB), found in Homo sapiens (Human).